The primary structure comprises 503 residues: Maturase K (503 aa).

The protein belongs to the intron maturase 2 family. MatK subfamily.

The protein localises to the plastid. The protein resides in the chloroplast. Its function is as follows. Usually encoded in the trnK tRNA gene intron. Probably assists in splicing its own and other chloroplast group II introns. This chain is Maturase K, found in Syzygium anisatum (Aniseed myrtle).